A 257-amino-acid polypeptide reads, in one-letter code: uncharacterized protein (257 aa).

The helical transmembrane segment at 6–26 threads the bilayer; sequence IFWLNLAAIIIISIVVSGDMF.

It belongs to the staphylococcal tandem lipoprotein family.

It is found in the cell membrane. This is an uncharacterized protein from Staphylococcus aureus (strain COL).